A 302-amino-acid polypeptide reads, in one-letter code: Mediator of RNA polymerase II transcription subunit 4 (302 aa).

Residues 98-145 (QLHANVEKIIAINDDLKSKIEELDRHRRLGENIKELEAESSNLDNTSK) adopt a coiled-coil conformation. The disordered stretch occupies residues 239 to 302 (GTTEEEKIQE…LFDSEDEFSD (64 aa)). A compositionally biased stretch (basic and acidic residues) spans 242–265 (EEEKIQEKKDEQVKKADKQQDTGI). The span at 268–278 (GSFGDYGSSSS) shows a compositional bias: low complexity. Residues 292 to 302 (DLFDSEDEFSD) are compositionally biased toward acidic residues.

Belongs to the Mediator complex subunit 4 family. In terms of assembly, component of the Mediator complex.

The protein localises to the nucleus. In terms of biological role, component of the Mediator complex, a coactivator involved in the regulated transcription of nearly all RNA polymerase II-dependent genes. Mediator functions as a bridge to convey information from gene-specific regulatory proteins to the basal RNA polymerase II transcription machinery. Mediator is recruited to promoters by direct interactions with regulatory proteins and serves as a scaffold for the assembly of a functional preinitiation complex with RNA polymerase II and the general transcription factors. This Scheffersomyces stipitis (strain ATCC 58785 / CBS 6054 / NBRC 10063 / NRRL Y-11545) (Yeast) protein is Mediator of RNA polymerase II transcription subunit 4 (MED4).